The following is a 289-amino-acid chain: Elongation factor Ts (289 aa).

The tract at residues 82–85 (TDFV) is involved in Mg(2+) ion dislocation from EF-Tu.

This sequence belongs to the EF-Ts family.

The protein localises to the cytoplasm. Its function is as follows. Associates with the EF-Tu.GDP complex and induces the exchange of GDP to GTP. It remains bound to the aminoacyl-tRNA.EF-Tu.GTP complex up to the GTP hydrolysis stage on the ribosome. The polypeptide is Elongation factor Ts (Marinobacter nauticus (strain ATCC 700491 / DSM 11845 / VT8) (Marinobacter aquaeolei)).